The following is a 75-amino-acid chain: Defensin-like protein 59 (75 aa).

The first 19 residues, 1–19 (MNITKSYVVIFFLVMLTNS), serve as a signal peptide directing secretion. 4 cysteine pairs are disulfide-bonded: cysteine 39–cysteine 73, cysteine 43–cysteine 66, cysteine 52–cysteine 71, and cysteine 56–cysteine 72.

It belongs to the DEFL family.

It localises to the secreted. The protein is Defensin-like protein 59 of Arabidopsis thaliana (Mouse-ear cress).